A 105-amino-acid polypeptide reads, in one-letter code: MVKLIESKEAFQEALAAAGDKLVVVDFSATWCGPCKMIKPFFHSLCDKYSNVVFLEVDVDDCQDVAADCEVKCMPTFQFYKKGQKVGEFSGANKEKLEATITEFA.

In terms of domain architecture, Thioredoxin spans 2-105 (VKLIESKEAF…KLEATITEFA (104 aa)). Lysine 3 carries the post-translational modification N6-acetyllysine. Position 8 is an N6-succinyllysine (lysine 8). Residues cysteine 32 and cysteine 35 each act as nucleophile in the active site. An intrachain disulfide couples cysteine 32 to cysteine 35. An N6-acetyllysine modification is found at lysine 39. Cysteine 62 and cysteine 69 each carry S-nitrosocysteine. Cysteine 73 carries the S-nitrosocysteine; alternate modification. At lysine 94 the chain carries N6-acetyllysine; alternate. An N6-succinyllysine; alternate modification is found at lysine 94.

This sequence belongs to the thioredoxin family. In terms of assembly, homodimer; disulfide-linked. Interacts with TXNIP through the redox-active site. Interacts with MAP3K5 and CASP3. Interacts with APEX1; the interaction stimulates the FOS/JUN AP-1 DNA-binding activity in a redox-dependent manner. Post-translationally, in the fully reduced protein, both Cys-69 and Cys-73 are nitrosylated in response to nitric oxide (NO). When two disulfide bonds are present in the protein, only Cys-73 is nitrosylated. Cys-73 can serve as donor for nitrosylation of target proteins.

It is found in the nucleus. The protein resides in the cytoplasm. It localises to the secreted. Functionally, participates in various redox reactions through the reversible oxidation of its active center dithiol to a disulfide and catalyzes dithiol-disulfide exchange reactions. Plays a role in the reversible S-nitrosylation of cysteine residues in target proteins, and thereby contributes to the response to intracellular nitric oxide. Nitrosylates the active site Cys of CASP3 in response to nitric oxide (NO), and thereby inhibits caspase-3 activity. Induces the FOS/JUN AP-1 DNA binding activity in ionizing radiation (IR) cells through its oxidation/reduction status and stimulates AP-1 transcriptional activity. This is Thioredoxin (Txn) from Rattus norvegicus (Rat).